A 161-amino-acid chain; its full sequence is Allophycocyanin beta chain (161 aa).

Position 71 is an N4-methylasparagine (asparagine 71). Cysteine 81 lines the (2R,3E)-phycocyanobilin pocket.

This sequence belongs to the phycobiliprotein family. As to quaternary structure, heterodimer of an alpha and a beta chain. In terms of processing, contains one covalently linked phycocyanobilin chromophore.

The protein localises to the plastid. It is found in the chloroplast thylakoid membrane. Light-harvesting photosynthetic bile pigment-protein from the phycobiliprotein complex. Allophycocyanin has a maximum absorption at approximately 650 nanometers. The sequence is that of Allophycocyanin beta chain (apcB) from Porphyra purpurea (Red seaweed).